The following is a 326-amino-acid chain: MRTSSMMENQVSLSSIQRAVWDGKLPLQITLASSESRTYDQTDPYLIACPRISYLPSLLPRLRAFFSPSLIEPNSQPHEGWFSFEGVPLKWHLPVGLLYDLYAGADPASKGTRVDETDHPTSSLNDTLPWRLTVHFSDWPDEELVRLDADGMVMHDAFINSVKEADFLRNGTAKGIMTLSKEDSAGLWQAVQDVDLLSFQRISNILLPPPNQPFRNVPIRFFLPLSPDSGSPSLKVVQSPLPPNIPATTNTSQSTNLRHSPATQVQTLGSALHSLLPNLFPSRRTPVLAKPVLHGAAVPMSAPIEELVRSCAYGDGWVYIVIRMMG.

Residue lysine 163 forms a Glycyl lysine isopeptide (Lys-Gly) (interchain with G-Cter in atg12) linkage.

The protein belongs to the ATG5 family. Conjugated with atg12. Conjugated to atg12; which is essential for autophagy.

Its subcellular location is the preautophagosomal structure membrane. Involved in cytoplasm to vacuole transport (Cvt) and autophagic vesicle formation. Autophagy is essential for maintenance of amino acid levels and protein synthesis under nitrogen starvation. Required for selective autophagic degradation of the nucleus (nucleophagy). Also required for mitophagy, which eliminates defective or superfluous mitochondria in order to fulfill cellular energy requirements and prevent excess ROS production. Conjugation with atg12, through a ubiquitin-like conjugating system involving atg7 as an E1-like activating enzyme and atg10 as an E2-like conjugating enzyme, is essential for its function. The atg12-atg5 conjugate acts as an E3-like enzyme which is required for lipidation of atg8 and atg8 association to the vesicle membranes. In Aspergillus fumigatus (strain ATCC MYA-4609 / CBS 101355 / FGSC A1100 / Af293) (Neosartorya fumigata), this protein is Autophagy protein 5 (atg5).